Here is a 148-residue protein sequence, read N- to C-terminus: Cell division protein SepF (148 aa).

This sequence belongs to the SepF family. As to quaternary structure, homodimer. Interacts with FtsZ.

The protein localises to the cytoplasm. Its function is as follows. Cell division protein that is part of the divisome complex and is recruited early to the Z-ring. Probably stimulates Z-ring formation, perhaps through the cross-linking of FtsZ protofilaments. Its function overlaps with FtsA. The sequence is that of Cell division protein SepF from Alkaliphilus metalliredigens (strain QYMF).